A 1059-amino-acid chain; its full sequence is DNA (cytosine-5)-methyltransferase CMT1 (1059 aa).

Disordered regions lie at residues 1 to 196 (MVPE…GALA) and 230 to 272 (CVGE…DEAR). Residues 29–41 (AEAEAVADLDEID) show a composition bias toward acidic residues. Composition is skewed to basic and acidic residues over residues 42 to 79 (REMSRAESRKRQRRTAKEKPGARKGATEWKPEDVEKAA), 92 to 129 (REMPRPELRKRQRRTAKEKPSAHEGATEWKPEDVEKAA), and 147 to 157 (SRGKRQRGVEK). A compositionally biased stretch (basic residues) spans 158 to 167 (VKRRTRKKTA). Residues 252–262 (RRVEDSDDHFV) show a composition bias toward basic and acidic residues. The 125-residue stretch at 312–436 (EIYHLDDDVY…VAYSTFANLP (125 aa)) folds into the BAH domain. The SAM-dependent MTase C5-type domain occupies 479–1017 (ASLLDLYSGC…YALGLAYRGE (539 aa)). In terms of domain architecture, Chromo spans 584–649 (FDVEELLEIC…KGHKENILPL (66 aa)). Cys662 is a catalytic residue.

The protein belongs to the class I-like SAM-binding methyltransferase superfamily. C5-methyltransferase family.

Its subcellular location is the nucleus. It carries out the reaction a 2'-deoxycytidine in DNA + S-adenosyl-L-methionine = a 5-methyl-2'-deoxycytidine in DNA + S-adenosyl-L-homocysteine + H(+). Involved in CpXpG DNA methylation. May not play a major role in maintaining CpXpG methylation. The sequence is that of DNA (cytosine-5)-methyltransferase CMT1 from Oryza sativa subsp. japonica (Rice).